Here is a 344-residue protein sequence, read N- to C-terminus: Ribosomal RNA large subunit methyltransferase Cfr (344 aa).

Residue Glu90 is the Proton acceptor of the active site. In terms of domain architecture, Radical SAM core spans 97-330 (KQGWESFCIS…ATVRTQFGSE (234 aa)). A disulfide bridge connects residues Cys104 and Cys335. 3 residues coordinate [4Fe-4S] cluster: Cys111, Cys115, and Cys118. S-adenosyl-L-methionine-binding positions include 157–158 (GE), Ser188, 211–213 (SLH), and Asn292. Residue Cys335 is the S-methylcysteine intermediate of the active site.

It belongs to the radical SAM superfamily. RlmN family. Cfr subfamily. [4Fe-4S] cluster serves as cofactor.

The protein localises to the cytoplasm. The catalysed reaction is adenosine(2503) in 23S rRNA + 2 reduced [2Fe-2S]-[ferredoxin] + 2 S-adenosyl-L-methionine = 8-methyladenosine(2503) in 23S rRNA + 5'-deoxyadenosine + L-methionine + 2 oxidized [2Fe-2S]-[ferredoxin] + S-adenosyl-L-homocysteine. Functionally, specifically methylates position 8 of adenine 2503 in 23S rRNA. Confers resistance to some classes of antibiotics. This Clostridium botulinum (strain Hall / ATCC 3502 / NCTC 13319 / Type A) protein is Ribosomal RNA large subunit methyltransferase Cfr.